The sequence spans 102 residues: Small ribosomal subunit protein uS10 (102 aa).

The disordered stretch occupies residues 34 to 58; the sequence is VSGPVPLPTKTLEVPSRKSPDGEGT.

It belongs to the universal ribosomal protein uS10 family. Part of the 30S ribosomal subunit.

Its function is as follows. Involved in the binding of tRNA to the ribosomes. The sequence is that of Small ribosomal subunit protein uS10 from Halobacterium salinarum (strain ATCC 29341 / DSM 671 / R1).